The following is a 183-amino-acid chain: Adenine phosphoribosyltransferase (183 aa).

It belongs to the purine/pyrimidine phosphoribosyltransferase family. As to quaternary structure, homodimer.

Its subcellular location is the cytoplasm. The enzyme catalyses AMP + diphosphate = 5-phospho-alpha-D-ribose 1-diphosphate + adenine. It participates in purine metabolism; AMP biosynthesis via salvage pathway; AMP from adenine: step 1/1. In terms of biological role, catalyzes a salvage reaction resulting in the formation of AMP, that is energically less costly than de novo synthesis. The protein is Adenine phosphoribosyltransferase of Edwardsiella ictaluri (strain 93-146).